A 593-amino-acid chain; its full sequence is Class E vacuolar protein-sorting machinery protein HSE1 (593 aa).

The region spanning 15–144 (ATSDELTSEN…SLKSQDAVAE (130 aa)) is the VHS domain. Residues 136–251 (LKSQDAVAED…AQPLSAATPP (116 aa)) are disordered. Basic and acidic residues predominate over residues 151–171 (PPREPTSEQLRAEDEELRRAL). Positions 162-181 (AEDEELRRALELSIQDQGGR) constitute a UIM domain. Polar residues predominate over residues 175–193 (IQDQGGRNAWPSYNTEQAE). Low complexity predominate over residues 194–227 (TSGSSAPAAASSSSSAYQPTSQSLAPAQQQQQQQ). Polar residues predominate over residues 232–241 (HTNGTSSSAH). The region spanning 252-311 (AVASRVRALYDFSPTEPGELAFSRGEVIRVLDSVYEHWWRGEVRGEAGIFPVNYVEVLPD) is the SH3 domain. Residues 474–593 (RHGYAQSAGA…SSYASHPTGH (120 aa)) form a disordered region. Over residues 504 to 521 (QQITMAHQQQPHEQQYSS) the composition is skewed to polar residues. The segment covering 523–539 (PHDDEKRRLFERARAES) has biased composition (basic and acidic residues). Over residues 540 to 552 (EAFQQQHFQSQAH) the composition is skewed to low complexity. Residues 566–593 (PDASVLNQQMGNMNIGGSSSYASHPTGH) show a composition bias toward polar residues.

The protein belongs to the STAM family. As to quaternary structure, component of the ESCRT-0 complex composed of HSE1 and VPS27.

It localises to the endosome membrane. Its function is as follows. Component of the ESCRT-0 complex which is the sorting receptor for ubiquitinated cargo proteins at the multivesicular body (MVB). The sequence is that of Class E vacuolar protein-sorting machinery protein HSE1 (HSE1) from Mycosarcoma maydis (Corn smut fungus).